A 176-amino-acid polypeptide reads, in one-letter code: Small ribosomal subunit protein uS5 (176 aa).

One can recognise an S5 DRBM domain in the interval 11 to 74 (LSEVLVDVNR…QAAKKRMMKV (64 aa)).

Belongs to the universal ribosomal protein uS5 family. As to quaternary structure, part of the 30S ribosomal subunit. Contacts proteins S4 and S8.

Its function is as follows. With S4 and S12 plays an important role in translational accuracy. Located at the back of the 30S subunit body where it stabilizes the conformation of the head with respect to the body. This chain is Small ribosomal subunit protein uS5, found in Rickettsia akari (strain Hartford).